The following is a 464-amino-acid chain: ATP synthase subunit beta (464 aa).

An ATP-binding site is contributed by 150–157 (GGAGVGKT).

The protein belongs to the ATPase alpha/beta chains family. In terms of assembly, F-type ATPases have 2 components, CF(1) - the catalytic core - and CF(0) - the membrane proton channel. CF(1) has five subunits: alpha(3), beta(3), gamma(1), delta(1), epsilon(1). CF(0) has three main subunits: a(1), b(2) and c(9-12). The alpha and beta chains form an alternating ring which encloses part of the gamma chain. CF(1) is attached to CF(0) by a central stalk formed by the gamma and epsilon chains, while a peripheral stalk is formed by the delta and b chains.

It is found in the cell membrane. It carries out the reaction ATP + H2O + 4 H(+)(in) = ADP + phosphate + 5 H(+)(out). Functionally, produces ATP from ADP in the presence of a proton gradient across the membrane. The catalytic sites are hosted primarily by the beta subunits. The protein is ATP synthase subunit beta of Dehalococcoides mccartyi (strain ATCC BAA-2266 / KCTC 15142 / 195) (Dehalococcoides ethenogenes (strain 195)).